We begin with the raw amino-acid sequence, 885 residues long: Chitin synthase 3 (885 aa).

The tract at residues 1 to 59 (MASQYPGHQLDDIPSTNVYRPPPRHEDDEAEHALLHQNSAYQSQYDDPHSRPLTPGQES) is disordered. Over residues 23 to 34 (PRHEDDEAEHAL) the composition is skewed to basic and acidic residues. Over residues 36–45 (HQNSAYQSQY) the composition is skewed to polar residues. The next 6 helical transmembrane spans lie at 565 to 585 (FFLH…WFSL), 620 to 640 (IINT…FILA), 650 to 670 (VAYI…IVLS), 707 to 727 (IVII…FLYM), 735 to 755 (SFAQ…IYAF), and 837 to 857 (LVAT…SDSL).

Belongs to the chitin synthase family. Class III subfamily.

Its subcellular location is the cell membrane. It catalyses the reaction [(1-&gt;4)-N-acetyl-beta-D-glucosaminyl](n) + UDP-N-acetyl-alpha-D-glucosamine = [(1-&gt;4)-N-acetyl-beta-D-glucosaminyl](n+1) + UDP + H(+). Its function is as follows. Polymerizes chitin, a structural polymer of the cell wall and septum, by transferring the sugar moiety of UDP-GlcNAc to the non-reducing end of the growing chitin polymer. Is not only stable at different pH, but is also able to tolerate a broad temperature range. With CHS2, plays an important role in virulence. The polypeptide is Chitin synthase 3 (Exophiala dermatitidis (Black yeast-like fungus)).